The chain runs to 428 residues: E3 ubiquitin-protein ligase RNF128 (428 aa).

An N-terminal signal peptide occupies residues 1-38 (MGPPLGAGVSCRGGCGSSRLLAWCFLLALSPQAPGSRG). Residues Asn48, Asn59, and Asn101 are each glycosylated (N-linked (GlcNAc...) asparagine). One can recognise a PA domain in the interval 75 to 183 (SPLEPVAGVL…LKGTKILQSI (109 aa)). A helical membrane pass occupies residues 208 to 228 (IFFVSVSFFIITAATVGYFIF). The RING-type; atypical zinc finger occupies 277 to 318 (CAVCIELYKPNDLVRILTCNHIFHKTCVDPWLLEHRTCPMCK). Residues 346–428 (ISNSASSHEE…QETAVREIKS (83 aa)) are disordered. Basic and acidic residues predominate over residues 416–428 (TPHQETAVREIKS).

In terms of processing, auto-ubiquitinated. Controls the development of T-cell clonal anergy by ubiquitination.

It is found in the cytoplasm. It localises to the endomembrane system. Its subcellular location is the cytoskeleton. The protein resides in the perinuclear region. It catalyses the reaction S-ubiquitinyl-[E2 ubiquitin-conjugating enzyme]-L-cysteine + [acceptor protein]-L-lysine = [E2 ubiquitin-conjugating enzyme]-L-cysteine + N(6)-ubiquitinyl-[acceptor protein]-L-lysine.. Its pathway is protein modification; protein ubiquitination. Functionally, E3 ubiquitin-protein ligase that catalyzes 'Lys-27', 'Lys-48'- or 'Lys-63'-linked polyubiquitin chains formation and plays a role in different biological processes such as modulation of immune response, cytoskeletal dynamics or protein homeostasis. Inhibits IL2 and IL4 transcription, thereby playing an important role in the induction of the anergic phenotype, a long-term stable state of T-lymphocyte unresponsiveness to antigenic stimulation associated with the blockade of interleukin production. Ubiquitinates ARPC5 with 'Lys-48' linkages and COR1A with 'Lys-63' linkages leading to their degradation, down-regulation of these cytoskeletal components results in impaired lamellipodium formation and reduced accumulation of F-actin at the immunological synapse. Functions in the patterning of the dorsal ectoderm; sensitizes ectoderm to respond to neural-inducing signals. Plays a positive role in innate immune response by promoting 'Lys-63'-linked ubiquitination of TBK1 after RNA- or DNA-virus infection. Regulates alveolar macrophage activation and neutrophil infiltration by interacting with TLR4, targeting it for degradation, and inhibiting NF-kappa-B activation, hence decreasing pro-inflammatory cytokines. Negatively regulates the IL-3/STAT5 signaling pathway by facilitating 'Lys-27'-linked polyubiquitination of IL3RA leading to its degradation via lysosomal pathway. Directly regulates the N-glycosylation process in the endoplasmic reticulum by targeting the glycosyl-transferase RPN1 for ubiquitination and degradation. Other substrates targeted for degradation by RNF128 include transmembrane proteins CD40L, CD83 or the tetraspanin CD151. The polypeptide is E3 ubiquitin-protein ligase RNF128 (RNF128) (Pongo abelii (Sumatran orangutan)).